The primary structure comprises 286 residues: UPF0761 membrane protein KPN78578_41360 (286 aa).

The next 7 membrane-spanning stretches (helical) occupy residues 44–64 (LLSLVPLIAVVFALFAAFPMF), 74–94 (FIFANFIPATGDVIQGYIEQF), 104–124 (VGAFGLIVTSLLLMYSIDSAL), 140–160 (FAVYWMILTLGPLLAGASLAI), 183–203 (LFPLILSWAAFWLLYSIVPTT), 210–230 (AVIGALVAALLFEAGKKAFAL), and 244–264 (VISVVPILFVWVYWTWCIVLL).

This sequence belongs to the UPF0761 family.

The protein resides in the cell inner membrane. In Klebsiella pneumoniae subsp. pneumoniae (strain ATCC 700721 / MGH 78578), this protein is UPF0761 membrane protein KPN78578_41360.